The chain runs to 142 residues: HTH-type transcriptional regulator MntR (142 aa).

Positions 1–63 (MPTPSMEDYI…YEKYRGLVLT (63 aa)) constitute an HTH dtxR-type domain. Residues Asp-8, Glu-11, His-77, Glu-99, Glu-102, and His-103 each coordinate Mn(2+).

It belongs to the DtxR/MntR family. Homodimer.

Its subcellular location is the cytoplasm. DNA binding is strongly activated by Mn(2+). Functionally, central regulator of manganese homeostasis. This chain is HTH-type transcriptional regulator MntR, found in Bacillus cereus (strain G9842).